Here is a 124-residue protein sequence, read N- to C-terminus: Small ribosomal subunit protein uS12 (124 aa).

At Asp89 the chain carries 3-methylthioaspartic acid.

It belongs to the universal ribosomal protein uS12 family. Part of the 30S ribosomal subunit. Contacts proteins S8 and S17. May interact with IF1 in the 30S initiation complex.

In terms of biological role, with S4 and S5 plays an important role in translational accuracy. Its function is as follows. Interacts with and stabilizes bases of the 16S rRNA that are involved in tRNA selection in the A site and with the mRNA backbone. Located at the interface of the 30S and 50S subunits, it traverses the body of the 30S subunit contacting proteins on the other side and probably holding the rRNA structure together. The combined cluster of proteins S8, S12 and S17 appears to hold together the shoulder and platform of the 30S subunit. This Shewanella frigidimarina (strain NCIMB 400) protein is Small ribosomal subunit protein uS12.